We begin with the raw amino-acid sequence, 282 residues long: Phosphatidylserine decarboxylase proenzyme (282 aa).

Residues aspartate 88, histidine 144, and serine 247 each act as charge relay system; for autoendoproteolytic cleavage activity in the active site. Serine 247 acts as the Schiff-base intermediate with substrate; via pyruvic acid; for decarboxylase activity in catalysis. Serine 247 carries the post-translational modification Pyruvic acid (Ser); by autocatalysis.

It belongs to the phosphatidylserine decarboxylase family. PSD-B subfamily. Prokaryotic type I sub-subfamily. As to quaternary structure, heterodimer of a large membrane-associated beta subunit and a small pyruvoyl-containing alpha subunit. It depends on pyruvate as a cofactor. Is synthesized initially as an inactive proenzyme. Formation of the active enzyme involves a self-maturation process in which the active site pyruvoyl group is generated from an internal serine residue via an autocatalytic post-translational modification. Two non-identical subunits are generated from the proenzyme in this reaction, and the pyruvate is formed at the N-terminus of the alpha chain, which is derived from the carboxyl end of the proenzyme. The autoendoproteolytic cleavage occurs by a canonical serine protease mechanism, in which the side chain hydroxyl group of the serine supplies its oxygen atom to form the C-terminus of the beta chain, while the remainder of the serine residue undergoes an oxidative deamination to produce ammonia and the pyruvoyl prosthetic group on the alpha chain. During this reaction, the Ser that is part of the protease active site of the proenzyme becomes the pyruvoyl prosthetic group, which constitutes an essential element of the active site of the mature decarboxylase.

It is found in the cell membrane. The catalysed reaction is a 1,2-diacyl-sn-glycero-3-phospho-L-serine + H(+) = a 1,2-diacyl-sn-glycero-3-phosphoethanolamine + CO2. It functions in the pathway phospholipid metabolism; phosphatidylethanolamine biosynthesis; phosphatidylethanolamine from CDP-diacylglycerol: step 2/2. Its function is as follows. Catalyzes the formation of phosphatidylethanolamine (PtdEtn) from phosphatidylserine (PtdSer). The sequence is that of Phosphatidylserine decarboxylase proenzyme from Xanthomonas oryzae pv. oryzae (strain MAFF 311018).